The sequence spans 184 residues: Peptidoglycan-recognition protein SC2 (184 aa).

A signal peptide spans 1–20; the sequence is MANKALILLAVLFCAQAVLG. One can recognise an N-acetylmuramoyl-L-alanine amidase domain in the interval 45-169; sequence SYAVIHHTAG…RQVGSTECPG (125 aa). H50 serves as a coordination point for Zn(2+). C57 and C63 are joined by a disulfide. Zn(2+)-binding residues include H159 and C167.

It belongs to the N-acetylmuramoyl-L-alanine amidase 2 family. The cofactor is Zn(2+).

It is found in the secreted. It carries out the reaction Hydrolyzes the link between N-acetylmuramoyl residues and L-amino acid residues in certain cell-wall glycopeptides.. Its function is as follows. N-acetylmuramyl-L-alanine amidase involved in innate immunity by degrading bacterial peptidoglycans (PGN). Probably plays a scavenger role by digesting biologically active PGN into biologically inactive fragments. Has no direct bacteriolytic activity. The protein is Peptidoglycan-recognition protein SC2 (PGRP-SC2) of Drosophila simulans (Fruit fly).